We begin with the raw amino-acid sequence, 399 residues long: Aspartate aminotransferase (399 aa).

The L-aspartate site is built by G42 and N179. N6-(pyridoxal phosphate)lysine is present on K240. R372 contributes to the L-aspartate binding site.

It belongs to the class-I pyridoxal-phosphate-dependent aminotransferase family. Homodimer. It depends on pyridoxal 5'-phosphate as a cofactor.

The protein localises to the cytoplasm. It carries out the reaction L-aspartate + 2-oxoglutarate = oxaloacetate + L-glutamate. This is Aspartate aminotransferase (aspC) from Sulfurisphaera tokodaii (strain DSM 16993 / JCM 10545 / NBRC 100140 / 7) (Sulfolobus tokodaii).